The chain runs to 304 residues: Glutaminase (304 aa).

Ser-63, Asn-114, Glu-158, Asn-165, Tyr-189, Tyr-240, and Val-258 together coordinate substrate.

The protein belongs to the glutaminase family. As to quaternary structure, homotetramer.

It carries out the reaction L-glutamine + H2O = L-glutamate + NH4(+). The protein is Glutaminase of Shewanella baltica (strain OS195).